Reading from the N-terminus, the 288-residue chain is S-methyl-5'-thioadenosine phosphorylase (288 aa).

Phosphate-binding positions include Ser10, 52 to 53, and 85 to 86; these read RH and TA. Met188 provides a ligand contact to substrate. Thr189 is a binding site for phosphate. 212–214 is a substrate binding site; sequence DYD.

It belongs to the PNP/MTAP phosphorylase family. MTAP subfamily. In terms of assembly, homotrimer.

It localises to the cytoplasm. Its subcellular location is the nucleus. It catalyses the reaction S-methyl-5'-thioadenosine + phosphate = 5-(methylsulfanyl)-alpha-D-ribose 1-phosphate + adenine. Its pathway is amino-acid biosynthesis; L-methionine biosynthesis via salvage pathway; S-methyl-5-thio-alpha-D-ribose 1-phosphate from S-methyl-5'-thioadenosine (phosphorylase route): step 1/1. Its function is as follows. Catalyzes the reversible phosphorylation of S-methyl-5'-thioadenosine (MTA) to adenine and 5-methylthioribose-1-phosphate. Involved in the breakdown of MTA, a major by-product of polyamine biosynthesis. Responsible for the first step in the methionine salvage pathway after MTA has been generated from S-adenosylmethionine. Has broad substrate specificity with 6-aminopurine nucleosides as preferred substrates. This Caenorhabditis elegans protein is S-methyl-5'-thioadenosine phosphorylase.